The chain runs to 457 residues: Chromosomal replication initiator protein DnaA (457 aa).

Residues 1-81 (MERDLSQLWQ…NNTDLVIKVQ (81 aa)) form a domain I, interacts with DnaA modulators region. The domain II stretch occupies residues 81-119 (QEGSKPAARKVVAQQEIANTPVQHSAPMPENEPQAAFRS). Positions 120-337 (NLNQHHLFEN…GALNRVHANA (218 aa)) are domain III, AAA+ region. Positions 165, 167, 168, and 169 each coordinate ATP. The domain IV, binds dsDNA stretch occupies residues 338-457 (DFTGKAITID…WSNLIRTLSA (120 aa)).

The protein belongs to the DnaA family. As to quaternary structure, oligomerizes as a right-handed, spiral filament on DNA at oriC.

It localises to the cytoplasm. In terms of biological role, plays an essential role in the initiation and regulation of chromosomal replication. ATP-DnaA binds to the origin of replication (oriC) to initiate formation of the DNA replication initiation complex once per cell cycle. Binds the DnaA box (a 9 base pair repeat at the origin) and separates the double-stranded (ds)DNA. Forms a right-handed helical filament on oriC DNA; dsDNA binds to the exterior of the filament while single-stranded (ss)DNA is stabiized in the filament's interior. The ATP-DnaA-oriC complex binds and stabilizes one strand of the AT-rich DNA unwinding element (DUE), permitting loading of DNA polymerase. After initiation quickly degrades to an ADP-DnaA complex that is not apt for DNA replication. Binds acidic phospholipids. The sequence is that of Chromosomal replication initiator protein DnaA from Mannheimia succiniciproducens (strain KCTC 0769BP / MBEL55E).